Consider the following 456-residue polypeptide: Probable glycine dehydrogenase (decarboxylating) subunit 1 (456 aa).

The protein belongs to the GcvP family. N-terminal subunit subfamily. The glycine cleavage system is composed of four proteins: P, T, L and H. In this organism, the P 'protein' is a heterodimer of two subunits.

It carries out the reaction N(6)-[(R)-lipoyl]-L-lysyl-[glycine-cleavage complex H protein] + glycine + H(+) = N(6)-[(R)-S(8)-aminomethyldihydrolipoyl]-L-lysyl-[glycine-cleavage complex H protein] + CO2. The glycine cleavage system catalyzes the degradation of glycine. The P protein binds the alpha-amino group of glycine through its pyridoxal phosphate cofactor; CO(2) is released and the remaining methylamine moiety is then transferred to the lipoamide cofactor of the H protein. This Legionella pneumophila (strain Lens) protein is Probable glycine dehydrogenase (decarboxylating) subunit 1.